The sequence spans 489 residues: Ent-kaurenoic acid oxidase 2 (489 aa).

A helical membrane pass occupies residues 5-25; that stretch reads GLILMWFPLIILGLFVLKWVL. A heme-binding site is contributed by Cys-436.

This sequence belongs to the cytochrome P450 family. The cofactor is heme. As to expression, widely expressed. Highly expressed in influorescence stem, influorescence, and silique tissue. Weakly expressed in cauline and rosette leaves. Expressed at a weaker level in stem and influorescence than AtKAO1/CYP88A3.

The protein resides in the endoplasmic reticulum membrane. It catalyses the reaction ent-kaur-16-en-19-oate + 3 reduced [NADPH--hemoprotein reductase] + 3 O2 = gibberellin A12 + 3 oxidized [NADPH--hemoprotein reductase] + 4 H2O + 4 H(+). The enzyme catalyses ent-kaur-16-en-19-oate + reduced [NADPH--hemoprotein reductase] + O2 = ent-7alpha-hydroxykaur-16-en-19-oate + oxidized [NADPH--hemoprotein reductase] + H2O + H(+). It carries out the reaction ent-7alpha-hydroxykaur-16-en-19-oate + reduced [NADPH--hemoprotein reductase] + O2 = gibberellin A12 aldehyde + oxidized [NADPH--hemoprotein reductase] + 2 H2O + H(+). The catalysed reaction is gibberellin A12 aldehyde + reduced [NADPH--hemoprotein reductase] + O2 = gibberellin A12 + oxidized [NADPH--hemoprotein reductase] + H2O + 2 H(+). It functions in the pathway plant hormone biosynthesis; gibberellin biosynthesis. In terms of biological role, catalyzes three successive oxidations of ent-kaurenoic acid giving gibberellin 12 (GA12), a key step in gibberellins (GAs) biosynthesis. GAs, which are involved many processes, including stem elongation, play a central role in plant development. The chain is Ent-kaurenoic acid oxidase 2 from Arabidopsis thaliana (Mouse-ear cress).